A 458-amino-acid polypeptide reads, in one-letter code: Monomethylamine methyltransferase MtmB1 (458 aa).

A non-standard amino acid (pyrrolysine) is located at residue O202.

The protein belongs to the monomethylamine methyltransferase family.

It carries out the reaction Co(I)-[methylamine-specific corrinoid protein] + methylamine + H(+) = methyl-Co(III)-[methylamine-specific corrinoid protein] + NH4(+). It functions in the pathway one-carbon metabolism; methanogenesis from methylamine. Catalyzes the transfer of the methyl group from monomethylamine to the corrinoid cofactor of MtmC. This chain is Monomethylamine methyltransferase MtmB1 (mtmB1), found in Methanosarcina barkeri (strain Fusaro / DSM 804).